A 232-amino-acid chain; its full sequence is Putative quercetin 2,3-dioxygenase PA1210 (232 aa).

A divalent metal cation contacts are provided by His57, His59, His101, and Glu103.

Belongs to the pirin family. A divalent metal cation serves as cofactor.

The enzyme catalyses quercetin + O2 = 2-(3,4-dihydroxybenzoyloxy)-4,6-dihydroxybenzoate + CO. It participates in flavonoid metabolism; quercetin degradation. In terms of biological role, putative quercetin 2,3-dioxygenase. The protein is Putative quercetin 2,3-dioxygenase PA1210 of Pseudomonas aeruginosa (strain ATCC 15692 / DSM 22644 / CIP 104116 / JCM 14847 / LMG 12228 / 1C / PRS 101 / PAO1).